Reading from the N-terminus, the 132-residue chain is Small ribosomal subunit protein uS9 (132 aa).

The interval asparagine 103–arginine 132 is disordered. Basic residues predominate over residues glutamate 114 to arginine 132.

This sequence belongs to the universal ribosomal protein uS9 family.

The protein is Small ribosomal subunit protein uS9 of Dehalococcoides mccartyi (strain CBDB1).